A 140-amino-acid chain; its full sequence is uncharacterized protein (140 aa).

The 129-residue stretch at 3 to 131 folds into the VOC domain; it reads RLDHIGIAVF…NGVLVELCEP (129 aa). 4 residues coordinate a divalent metal cation: histidine 6, glutamate 53, histidine 77, and glutamate 127.

Belongs to the methylmalonyl-CoA epimerase family.

This is an uncharacterized protein from Bacillus subtilis (strain 168).